Consider the following 263-residue polypeptide: Tryptophan synthase alpha chain (263 aa).

Residues E46 and D57 each act as proton acceptor in the active site.

The protein belongs to the TrpA family. Tetramer of two alpha and two beta chains.

It catalyses the reaction (1S,2R)-1-C-(indol-3-yl)glycerol 3-phosphate + L-serine = D-glyceraldehyde 3-phosphate + L-tryptophan + H2O. The protein operates within amino-acid biosynthesis; L-tryptophan biosynthesis; L-tryptophan from chorismate: step 5/5. Functionally, the alpha subunit is responsible for the aldol cleavage of indoleglycerol phosphate to indole and glyceraldehyde 3-phosphate. In Bacteroides fragilis (strain ATCC 25285 / DSM 2151 / CCUG 4856 / JCM 11019 / LMG 10263 / NCTC 9343 / Onslow / VPI 2553 / EN-2), this protein is Tryptophan synthase alpha chain.